Here is a 301-residue protein sequence, read N- to C-terminus: RNA polymerase II holoenzyme cyclin-like subunit (301 aa).

In terms of domain architecture, Cyclin N-terminal spans 53–142; the sequence is QQLIKLGKRM…LGECEFALIS (90 aa).

It belongs to the cyclin family. Cyclin C subfamily. As to quaternary structure, component of the srb8-11 complex, a regulatory module of the Mediator complex.

Its subcellular location is the nucleus. Component of the srb8-11 complex. The srb8-11 complex is a regulatory module of the Mediator complex which is itself involved in regulation of basal and activated RNA polymerase II-dependent transcription. The srb8-11 complex may be involved in the transcriptional repression of a subset of genes regulated by Mediator. It may inhibit the association of the Mediator complex with RNA polymerase II to form the holoenzyme complex. The srb8-11 complex phosphorylates the C-terminal domain (CTD) of the largest subunit of RNA polymerase II. The chain is RNA polymerase II holoenzyme cyclin-like subunit (ssn8) from Aspergillus oryzae (strain ATCC 42149 / RIB 40) (Yellow koji mold).